The following is a 156-amino-acid chain: 6,7-dimethyl-8-ribityllumazine synthase (156 aa).

5-amino-6-(D-ribitylamino)uracil contacts are provided by residues phenylalanine 22, 57–59 (AYE), and 81–83 (TVI). Residue 86-87 (GT) coordinates (2S)-2-hydroxy-3-oxobutyl phosphate. The active-site Proton donor is histidine 89. Phenylalanine 114 contributes to the 5-amino-6-(D-ribitylamino)uracil binding site. (2S)-2-hydroxy-3-oxobutyl phosphate is bound at residue arginine 128.

Belongs to the DMRL synthase family. As to quaternary structure, forms an icosahedral capsid composed of 60 subunits, arranged as a dodecamer of pentamers.

It catalyses the reaction (2S)-2-hydroxy-3-oxobutyl phosphate + 5-amino-6-(D-ribitylamino)uracil = 6,7-dimethyl-8-(1-D-ribityl)lumazine + phosphate + 2 H2O + H(+). It participates in cofactor biosynthesis; riboflavin biosynthesis; riboflavin from 2-hydroxy-3-oxobutyl phosphate and 5-amino-6-(D-ribitylamino)uracil: step 1/2. In terms of biological role, catalyzes the formation of 6,7-dimethyl-8-ribityllumazine by condensation of 5-amino-6-(D-ribitylamino)uracil with 3,4-dihydroxy-2-butanone 4-phosphate. This is the penultimate step in the biosynthesis of riboflavin. The protein is 6,7-dimethyl-8-ribityllumazine synthase of Sodalis glossinidius (strain morsitans).